The sequence spans 535 residues: Dual specificity mitogen-activated protein kinase kinase 7 (535 aa).

An N-acetylalanine modification is found at Ala-2. Residues 2-30 (AASSLEQKLSRLEAKLKQENREARRRIDL) are a coiled coil. The segment at 37–73 (QRPRPIIVITLSPAPAPSQRAALQLPLANDGGSRSPS) is d domain. Residues 63–93 (LANDGGSRSPSSESSPQHPTPPTRPRHMLGL) form a disordered region. The span at 69-79 (SRSPSSESSPQ) shows a compositional bias: low complexity. Residues 136–396 (LENLGEMGSG…YNKLLEHSFI (261 aa)) enclose the Protein kinase domain. ATP is bound by residues 142 to 150 (MGSGTCGQV) and Lys-165. Asp-259 serves as the catalytic Proton acceptor. The residue at position 287 (Ser-287) is a Phosphoserine; by MAP3K. A Phosphothreonine; by MAP3K modification is found at Thr-291. A DVD domain region spans residues 393–416 (HSFIKHYEILEVDVASWFKDVMAK). Ser-427 bears the Phosphoserine mark.

Belongs to the protein kinase superfamily. STE Ser/Thr protein kinase family. MAP kinase kinase subfamily. In terms of assembly, interacts with RASSF7, the interaction promotes phosphorylation. Interacts with VRK2. Interacts (via its D domain) with its substrates MAPK8/JNK1, MAPK9/JNK2 and MAPK10/JNK3. Interacts (via its DVD domain) with MAP3Ks activators like MAP3K5/ASK1 and MAP3K1/MEKK1. Interacts with SH3RF1, MAPK8IP1/JIP1, MAPK8IP2/JIP2 and MAPK8IP3/JIP3 scaffold proteins. Found in a complex with SH3RF1, RAC1, MAP3K11/MLK3, MAPK8IP1/JIP1 and MAPK8/JNK1. Found in a complex with SH3RF1, RAC2, MAP3K7/TAK1, MAPK8IP1/JIP1, MAPK8/JNK1 and MAPK9/JNK2. It depends on Mg(2+) as a cofactor. Post-translationally, activated by phosphorylation on Ser-287 and Thr-291 by MAP kinase kinase kinases (MAP3Ks). Expressed at high levels in brain, lung, liver, skeletal muscle, kidney, and testis and at lower levels in the heart and spleen.

The protein resides in the nucleus. It is found in the cytoplasm. The catalysed reaction is L-seryl-[protein] + ATP = O-phospho-L-seryl-[protein] + ADP + H(+). The enzyme catalyses L-threonyl-[protein] + ATP = O-phospho-L-threonyl-[protein] + ADP + H(+). It carries out the reaction L-tyrosyl-[protein] + ATP = O-phospho-L-tyrosyl-[protein] + ADP + H(+). With respect to regulation, activated by phosphorylation by specific MAP kinase kinase kinases such as MAP3K1/MEKK1, MAP3K3/MEKK3, MAP3K11/MLK3 and MAP3K12/DLK. Isoforms 3 and 4 have lower basal activity but a higher level of inducible activation, than isoforms 2, 6, 7 and 8. Functionally, dual specificity protein kinase which acts as an essential component of the MAP kinase signal transduction pathway. Essential component of the stress-activated protein kinase/c-Jun N-terminal kinase (SAP/JNK) signaling pathway. With MAP2K4/MKK4, is the one of the only known kinase to directly activate the stress-activated protein kinase/c-Jun N-terminal kinases MAPK8/JNK1, MAPK9/JNK2 and MAPK10/JNK3. MAP2K4/MKK4 and MAP2K7/MKK7 both activate the JNKs by phosphorylation, but they differ in their preference for the phosphorylation site in the Thr-Pro-Tyr motif. MAP2K4/MKK4 shows preference for phosphorylation of the Tyr residue and MAP2K7/MKK7 for the Thr residue. The monophosphorylation of JNKs on the Thr residue is sufficient to increase JNK activity indicating that MAP2K7/MKK7 is important to trigger JNK activity, while the additional phosphorylation of the Tyr residue by MAP2K4/MKK4 ensures optimal JNK activation. Has a specific role in JNK signal transduction pathway activated by pro-inflammatory cytokines. The MKK/JNK signaling pathway is also involved in mitochondrial death signaling pathway, including the release cytochrome c, leading to apoptosis. Part of a non-canonical MAPK signaling pathway, composed of the upstream MAP3K12 kinase and downstream MAP kinases MAPK1/ERK2 and MAPK3/ERK1, that enhances the AP-1-mediated transcription of APP in response to APOE. The sequence is that of Dual specificity mitogen-activated protein kinase kinase 7 from Mus musculus (Mouse).